We begin with the raw amino-acid sequence, 358 residues long: Gap junction alpha-5 protein (358 aa).

Topologically, residues 1 to 19 (MGDWSFLGEFLEEVHKHST) are cytoplasmic. A helical transmembrane segment spans residues 20–40 (VIGKVWLTVLFIFRMLVLGTA). Over 41–76 (AESSWGDEQADFQCDTMQPGCGNVCYDQAFPISHIR) the chain is Extracellular. A helical transmembrane segment spans residues 77-97 (YWVLQIIFVSTPSLVYMGHAM). Topologically, residues 98-164 (HTVRMQEKRK…CSILIRTTME (67 aa)) are cytoplasmic. Residues 165-185 (VAFIVGQYLLYGIFLDTLHVC) form a helical membrane-spanning segment. The Extracellular segment spans residues 186–205 (RRSPCPHPVNCYVSRPTEKN). Residues 206-226 (VFIVFMLAVAALSLFLSLAEL) traverse the membrane as a helical segment. Residues 227–358 (YHLGWKKLRQ…SKARSDDLSV (132 aa)) lie on the Cytoplasmic side of the membrane. Residues 318–358 (AQKPEVPNGASPGHRLPHGYQSDKRRLSKASSKARSDDLSV) form a disordered region. 2 positions are modified to phosphoserine: serine 353 and serine 357.

The protein belongs to the connexin family. Alpha-type (group II) subfamily. In terms of assembly, a connexon is composed of a hexamer of connexins.

Its subcellular location is the cell membrane. It is found in the cell junction. The protein resides in the gap junction. In terms of biological role, one gap junction consists of a cluster of closely packed pairs of transmembrane channels, the connexons, through which materials of low MW diffuse from one cell to a neighboring cell. This chain is Gap junction alpha-5 protein (GJA5), found in Canis lupus familiaris (Dog).